Reading from the N-terminus, the 127-residue chain is MATASRKKKKVKVTPEGTVHIKASFNNIMVTITDTLGNTVSWSSAGKNGFRGSKKNTPYASQVTSEAAAKEAYDLGMRYVDVLIKGPGSGRDAAIRALQGVGLEVRSIRDITPLPHNGCRPPKRRRV.

It belongs to the universal ribosomal protein uS11 family. Part of the 30S ribosomal subunit. Interacts with proteins S7 and S18. Binds to IF-3.

Its function is as follows. Located on the platform of the 30S subunit, it bridges several disparate RNA helices of the 16S rRNA. Forms part of the Shine-Dalgarno cleft in the 70S ribosome. In Chlorobaculum parvum (strain DSM 263 / NCIMB 8327) (Chlorobium vibrioforme subsp. thiosulfatophilum), this protein is Small ribosomal subunit protein uS11.